The chain runs to 205 residues: Protein Nef (205 aa).

Residue Gly2 is the site of N-myristoyl glycine; by host attachment. Ser6 is modified (phosphoserine; by host). The segment at 62–65 is acidic; interacts with host PACS1 and PACS2; stabilizes the interaction of NEF/MHC-I with host AP1M1; necessary for MHC-I internalization; sequence DNEE. Positions 69 to 78 are SH3-binding; interaction with Src family tyrosine kinases; the sequence is PVRPQVPTRP. The short motif at 72-75 is the PxxP; stabilizes the interaction of NEF/MHC-I with host AP1M1; necessary for MHC-I internalization element; the sequence is PQVP. The interval 108–124 is mediates dimerization, Nef-PTE1 interaction; that stretch reads EILDLWVYHTQGFFPDW. A binding to ATP6V1H region spans residues 148–180; that stretch reads LTEEQVEQANEGDNNCLLHPICQHGMEDEDKEV. A Dileucine internalization motif; necessary for CD4 internalization motif is present at residues 164-165; it reads LL. Residues 174-175 carry the Diacidic; necessary for CD4 internalization motif; it reads ED.

The protein belongs to the lentivirus primate group Nef protein family. Monomer; cytosolic form. Homodimer; membrane bound form. Interacts with Nef associated p21-activated kinase (PAK2); this interaction activates PAK2. Associates with the Nef-MHC-I-AP1 complex; this complex is required for MHC-I internalization. Interacts (via C-terminus) with host PI3-kinase. Interacts with host PACS1; this interaction seems to be weak. Interacts with host PACS2. Interacts with host LCK and MAPK3; these interactions inhibit the kinase activity of the latter. Interacts with host ATP6V1H; this interaction may play a role in CD4 endocytosis. Associates with the CD4-Nef-AP2 complex; this complex is required for CD4 internalization. Interacts with host AP2 subunit alpha and AP2 subunit sigma2. Interacts with TCR-zeta chain; this interaction up-regulates the Fas ligand (FasL) surface expression. Interacts with host HCK, LYN, and SRC; these interactions activate the Src family kinases. Interacts with MAP3K5; this interaction inhibits the Fas and TNFR-mediated death signals. Interacts with beta-COP and PTE1. Interacts with human RACK1; this increases Nef phosphorylation by PKC. Interacts with TP53; this interaction decreases the half-life of TP53, protecting the infected cell against p53-mediated apoptosis. Post-translationally, the virion-associated Nef proteins are cleaved by the viral protease to release the soluble C-terminal core protein. Nef is probably cleaved concomitantly with viral structural proteins on maturation of virus particles. In terms of processing, myristoylated. Phosphorylated on serine residues, probably by host PKCdelta and theta.

It localises to the host cell membrane. The protein localises to the virion. It is found in the secreted. Its subcellular location is the host Golgi apparatus membrane. Functionally, factor of infectivity and pathogenicity, required for optimal virus replication. Alters numerous pathways of T-lymphocyte function and down-regulates immunity surface molecules in order to evade host defense and increase viral infectivity. Alters the functionality of other immunity cells, like dendritic cells, monocytes/macrophages and NK cells. In infected CD4(+) T-lymphocytes, down-regulates the surface MHC-I, mature MHC-II, CD4, CD28, CCR5 and CXCR4 molecules. Mediates internalization and degradation of host CD4 through the interaction of with the cytoplasmic tail of CD4, the recruitment of AP-2 (clathrin adapter protein complex 2), internalization through clathrin coated pits, and subsequent transport to endosomes and lysosomes for degradation. Diverts host MHC-I molecules to the trans-Golgi network-associated endosomal compartments by an endocytic pathway to finally target them for degradation. MHC-I down-regulation may involve AP-1 (clathrin adapter protein complex 1) or possibly Src family kinase-ZAP70/Syk-PI3K cascade recruited by PACS2. In consequence infected cells are masked for immune recognition by cytotoxic T-lymphocytes. Decreasing the number of immune receptors also prevents reinfection by more HIV particles (superinfection). Down-regulates host SERINC3 and SERINC5 thereby excluding these proteins from the viral particles. Virion infectivity is drastically higher when SERINC3 or SERINC5 are excluded from the viral envelope, because these host antiviral proteins impair the membrane fusion event necessary for subsequent virion penetration. Its function is as follows. Bypasses host T-cell signaling by inducing a transcriptional program nearly identical to that of anti-CD3 cell activation. Interaction with TCR-zeta chain up-regulates the Fas ligand (FasL). Increasing surface FasL molecules and decreasing surface MHC-I molecules on infected CD4(+) cells send attacking cytotoxic CD8+ T-lymphocytes into apoptosis. In terms of biological role, plays a role in optimizing the host cell environment for viral replication without causing cell death by apoptosis. Protects the infected cells from apoptosis in order to keep them alive until the next virus generation is ready to strike. Inhibits the Fas and TNFR-mediated death signals by blocking MAP3K5/ASK1. Decreases the half-life of TP53, protecting the infected cell against p53-mediated apoptosis. Inhibits the apoptotic signals regulated by the Bcl-2 family proteins through the formation of a Nef/PI3-kinase/PAK2 complex that leads to activation of PAK2 and induces phosphorylation of host BAD. Functionally, extracellular Nef protein targets CD4(+) T-lymphocytes for apoptosis by interacting with CXCR4 surface receptors. This is Protein Nef from Simian immunodeficiency virus (isolate CPZ GAB1) (SIV-cpz).